We begin with the raw amino-acid sequence, 264 residues long: JmjC domain-containing protein 8 (264 aa).

The signal sequence occupies residues 1–23 (MAPASRLLALWALAAVALPGSGA). N-linked (GlcNAc...) asparagine glycans are attached at residues Asn-130, Asn-140, and Asn-209. The 134-residue stretch at 131–264 (DTLYFFGDNN…TSVFISTFLG (134 aa)) folds into the JmjC domain.

Oligomer. Dimer. Interacts with PKM; regulates angiogenesis and metabolism. Post-translationally, N-glycosylated.

It localises to the endoplasmic reticulum lumen. Its subcellular location is the cytoplasm. Functions as a positive regulator of TNF-induced NF-kappa-B signaling. Regulates angiogenesis and cellular metabolism through interaction with PKM. The protein is JmjC domain-containing protein 8 of Homo sapiens (Human).